Reading from the N-terminus, the 265-residue chain is 3-methyl-2-oxobutanoate hydroxymethyltransferase (265 aa).

Positions 43 and 82 each coordinate Mg(2+). Residues 43–44 (DS), D82, and K111 contribute to the 3-methyl-2-oxobutanoate site. E113 is a Mg(2+) binding site. The active-site Proton acceptor is E180.

This sequence belongs to the PanB family. As to quaternary structure, homodecamer; pentamer of dimers. It depends on Mg(2+) as a cofactor.

The protein resides in the cytoplasm. The enzyme catalyses 3-methyl-2-oxobutanoate + (6R)-5,10-methylene-5,6,7,8-tetrahydrofolate + H2O = 2-dehydropantoate + (6S)-5,6,7,8-tetrahydrofolate. It functions in the pathway cofactor biosynthesis; (R)-pantothenate biosynthesis; (R)-pantoate from 3-methyl-2-oxobutanoate: step 1/2. Its function is as follows. Catalyzes the reversible reaction in which hydroxymethyl group from 5,10-methylenetetrahydrofolate is transferred onto alpha-ketoisovalerate to form ketopantoate. This is 3-methyl-2-oxobutanoate hydroxymethyltransferase from Francisella tularensis subsp. mediasiatica (strain FSC147).